Reading from the N-terminus, the 878-residue chain is MSSDNNDNNNNHSYKEANYYNYYRLLENNLKKKSRGLFLTENNKKKSKVFKLTKFSIDTEINDCSSTSKWTQIYSNDSKTPIEARYKIPLHPTWIITDFRVESQDKVVVLIGKIKEHEKALNNYNDTIANGGQSFLASKSSIEDLDFFNLNIGNLPPNETVKITLTITSEIGTHINGQLHYYLHHSLFPTYNFNFNLNIIIKLSNSIESIINWYGNSKRILNINSSNTGCGSDDGDDDVIKVLYNNSNNKEIKIKSNDKLNSIEDSLVLIIQPSIINDEPKSMIEYNKIENSLAVSINYYSSFKDIKIEDMNQKSEFIFLIDCSGSMVGEPMRKVKRAMEIIIRSLNENQHRVNVVCFGSSFKKVFKVSRDYNDETLECLSKYIQSIEANLGGTELLTPIKNILSSPPNPEYPRQLFILTDGEAPHRDKIIHYLSKESNTTRIFTYGIGDSVDIDLIIGLSNACKGHYEFITDNDNFEKQVMKLLNISLKPMFSNIKLDLSTLFSNNKNKNKNNNNCKEDIIIQSPSQIRPLFYQERMIVYLMIESLSTRLKDIINDSIENSKPLIITMTCDGPKGDKLSIPIELDLKNNCIISSSSSSSSSSSSSSSSSSSSSSSSSSSSSSTTTATTNQNQIHRLSAYHQIKDLEEKERKKKKDNKTRIVELSKKYGILSKHTSFIVKCESTKPTLESMDFIDIIDQFSFENQVSATKNKSQCLLTKSKKSKTAAPTTTTTTTITKKRFSDVDEDISRQSVKKSKKSETKEETTKTTSSKTKSSSSFDLIDLLRIQRANGSWTKSTISQMGISIGNAPVELSSDQLYNIWVTLIVISKIIKLFPNEKIEYEFAIQKSKKWVKLELSKLNLPNTTFDKFSLKANSLC.

The VIT domain occupies 36–169 (GLFLTENNKK…TVKITLTITS (134 aa)). The VWFA domain occupies 316 to 496 (EFIFLIDCSG…ISLKPMFSNI (181 aa)). The segment covering 595–623 (SSSSSSSSSSSSSSSSSSSSSSSSSSSSS) has biased composition (low complexity). Disordered regions lie at residues 595-638 (SSSS…HRLS) and 752-774 (SVKKSKKSETKEETTKTTSSKTK). The segment covering 624–635 (TTTATTNQNQIH) has biased composition (polar residues).

In Dictyostelium discoideum (Social amoeba), this protein is von Willebrand factor A domain-containing protein DDB_G0267758.